The sequence spans 332 residues: Glyceraldehyde-3-phosphate dehydrogenase 2 (332 aa).

NAD(+)-binding positions include 11–12 (RI), D32, and R77. D-glyceraldehyde 3-phosphate-binding positions include 148–150 (SCT), T179, 208–209 (TG), and R231. C149 (nucleophile) is an active-site residue. N313 serves as a coordination point for NAD(+).

Belongs to the glyceraldehyde-3-phosphate dehydrogenase family. As to quaternary structure, homotetramer.

It localises to the cytoplasm. The enzyme catalyses D-glyceraldehyde 3-phosphate + phosphate + NAD(+) = (2R)-3-phospho-glyceroyl phosphate + NADH + H(+). Its pathway is carbohydrate degradation; glycolysis; pyruvate from D-glyceraldehyde 3-phosphate: step 1/5. This chain is Glyceraldehyde-3-phosphate dehydrogenase 2 (Gapdh2), found in Drosophila pseudoobscura pseudoobscura (Fruit fly).